A 781-amino-acid polypeptide reads, in one-letter code: Toll-like receptor 2 type-2 (781 aa).

The N-terminal stretch at 1 to 24 (MHTWKMWAICTALAAHLPEEQALR) is a signal peptide. Over 25-585 (QACLSCDATQ…QLSLMECHRS (561 aa)) the chain is Extracellular. Cysteine 30 and cysteine 36 are disulfide-bonded. A glycan (N-linked (GlcNAc...) asparagine) is linked at asparagine 37. 6 LRR repeats span residues 53–74 (KITVLNLAHNRIKVIRTHDLQK), 77–98 (NLRTLLLQSNQISSIDEDSFGS), 101–122 (KLELLDLSNNSLAHLSPVWFGP), 125–146 (SLQHLRIQGNSYSDLGESSPFS), 150–171 (NLSSLHLGNPQFSIIRQGNFEG), and 174–195 (FLNTLRIDGDNLSQYEPGSLKS). N-linked (GlcNAc...) asparagine glycosylation is present at asparagine 109. Residues asparagine 150, asparagine 184, asparagine 301, and asparagine 313 are each glycosylated (N-linked (GlcNAc...) asparagine). The cysteines at positions 350 and 379 are disulfide-linked. LRR repeat units lie at residues 358–378 (SLEYLDLSANLLGDQSLEHSA), 385–406 (SLQTLNLSQNSLSDLKMTGKSL), 411–432 (NLNLLDISENNFGEIPDMCEWP), 434–455 (NLKYLNLSSTQIPKLTTCIPST), 456–474 (LEVLDVSANNLQDFGLQLP), 475–496 (FLKELYLTKNHLKTLPEATDIP), and 497–518 (NLVAMSISRNKLNSFSKEEFES). Residue asparagine 390 is glycosylated (N-linked (GlcNAc...) asparagine). Cysteine 429 and cysteine 451 are oxidised to a cystine. An N-linked (GlcNAc...) asparagine glycan is attached at asparagine 439. The 55-residue stretch at 530 to 584 (NNFICSCEFLSFIHHEAGIAQVLVGWPESYICDSPLTVRGAQVGSVQLSLMECHR) folds into the LRRCT domain. A helical membrane pass occupies residues 586-606 (LLVSLICTLVFLFILILVVVG). Over 607 to 781 (YKYHAVWYMR…WENLKAALKS (175 aa)) the chain is Cytoplasmic. Positions 636–779 (ICYDAFVSYS…MFWENLKAAL (144 aa)) constitute a TIR domain.

Belongs to the Toll-like receptor family. In terms of assembly, binds MYD88 (via TIR domain). N-glycosylated. In terms of tissue distribution, highly expressed in ovary. Also detected in brain, heart, lung, liver, spleen and kidney, and at low levels in gizzard, muscle, testis and proventriculus.

It is found in the membrane. In terms of biological role, participates in the innate immune response to microbial agents. Acts via MYD88 and TRAF6, leading to NF-kappa-B activation, cytokine secretion and the inflammatory response. Mediates the response to mycoplasmal macrophage-activating lipopeptide-2kD (MALP-2). The sequence is that of Toll-like receptor 2 type-2 (TLR2-2) from Gallus gallus (Chicken).